Here is a 347-residue protein sequence, read N- to C-terminus: S-adenosylmethionine:tRNA ribosyltransferase-isomerase (347 aa).

This sequence belongs to the QueA family. Monomer.

It is found in the cytoplasm. The enzyme catalyses 7-aminomethyl-7-carbaguanosine(34) in tRNA + S-adenosyl-L-methionine = epoxyqueuosine(34) in tRNA + adenine + L-methionine + 2 H(+). It participates in tRNA modification; tRNA-queuosine biosynthesis. Its function is as follows. Transfers and isomerizes the ribose moiety from AdoMet to the 7-aminomethyl group of 7-deazaguanine (preQ1-tRNA) to give epoxyqueuosine (oQ-tRNA). In Bordetella pertussis (strain Tohama I / ATCC BAA-589 / NCTC 13251), this protein is S-adenosylmethionine:tRNA ribosyltransferase-isomerase.